Here is a 435-residue protein sequence, read N- to C-terminus: Protein CHLOROPLAST IMPORT APPARATUS 2 (435 aa).

A chloroplast-targeting transit peptide spans 1–59; sequence MSACLSSGGGGAAAYSFELEKVKSPPPSSSTTTTRATSPSSTISESSNSPLAISTRKPR. Disordered regions lie at residues 21-66 and 412-435; these read KVKS…KRPN and ADQR…SGQR. Residues 29 to 49 are compositionally biased toward low complexity; it reads SSTTTTRATSPSSTISESSNS. Basic residues predominate over residues 56–65; the sequence is RKPRTQRKRP. Residues 383–425 enclose the CCT domain; it reads REASVLRYKEKRRTRLFSKKIRYQVRKLNADQRPRMKGRFVRR.

Expressed in leaves and young flower buds.

It localises to the plastid. It is found in the chloroplast. The protein localises to the nucleus. Functionally, responsible for specific up-regulation of the translocon genes TOC33 and TOC75 in leaves. Involved in the general chloroplast protein import pathway regulation, including protein import and protein translation efficiencies. The polypeptide is Protein CHLOROPLAST IMPORT APPARATUS 2 (CIA2) (Arabidopsis thaliana (Mouse-ear cress)).